The chain runs to 125 residues: Small ribosomal subunit protein uS12 (125 aa).

Residues 9–31 (RQGREVEKIKSKSPAMENSPQRR) form a disordered region. Residue Asp89 is modified to 3-methylthioaspartic acid. Positions 105-125 (QGVKDRKQSRSKYGAKRPKAK) are disordered. A compositionally biased stretch (basic residues) spans 113 to 125 (SRSKYGAKRPKAK).

This sequence belongs to the universal ribosomal protein uS12 family. Part of the 30S ribosomal subunit. Contacts proteins S8 and S17. May interact with IF1 in the 30S initiation complex.

With S4 and S5 plays an important role in translational accuracy. Its function is as follows. Interacts with and stabilizes bases of the 16S rRNA that are involved in tRNA selection in the A site and with the mRNA backbone. Located at the interface of the 30S and 50S subunits, it traverses the body of the 30S subunit contacting proteins on the other side and probably holding the rRNA structure together. The combined cluster of proteins S8, S12 and S17 appears to hold together the shoulder and platform of the 30S subunit. This Polaromonas naphthalenivorans (strain CJ2) protein is Small ribosomal subunit protein uS12.